The primary structure comprises 285 residues: Ribonuclease Z (285 aa).

Positions 61, 63, 65, 66, 152, 175, and 239 each coordinate Zn(2+). The active-site Proton acceptor is aspartate 65.

It belongs to the RNase Z family. In terms of assembly, homodimer. Requires Zn(2+) as cofactor.

The catalysed reaction is Endonucleolytic cleavage of RNA, removing extra 3' nucleotides from tRNA precursor, generating 3' termini of tRNAs. A 3'-hydroxy group is left at the tRNA terminus and a 5'-phosphoryl group is left at the trailer molecule.. In terms of biological role, zinc phosphodiesterase, which displays some tRNA 3'-processing endonuclease activity. Probably involved in tRNA maturation, by removing a 3'-trailer from precursor tRNA. The sequence is that of Ribonuclease Z from Mycobacterium sp. (strain JLS).